The chain runs to 262 residues: uncharacterized protein (262 aa).

The protein belongs to the BtpA family.

This is an uncharacterized protein from Pyrococcus furiosus (strain ATCC 43587 / DSM 3638 / JCM 8422 / Vc1).